The sequence spans 470 residues: Glutamate--tRNA ligase 1 (470 aa).

Residues 15–25 (PSPTGTMHIGT) carry the 'HIGH' region motif. Positions 241-245 (KLSKR) match the 'KMSKS' region motif. Residue K244 coordinates ATP.

Belongs to the class-I aminoacyl-tRNA synthetase family. Glutamate--tRNA ligase type 1 subfamily. In terms of assembly, monomer.

Its subcellular location is the cytoplasm. It catalyses the reaction tRNA(Glu) + L-glutamate + ATP = L-glutamyl-tRNA(Glu) + AMP + diphosphate. Functionally, catalyzes the attachment of glutamate to tRNA(Glu) in a two-step reaction: glutamate is first activated by ATP to form Glu-AMP and then transferred to the acceptor end of tRNA(Glu). In Jannaschia sp. (strain CCS1), this protein is Glutamate--tRNA ligase 1.